A 417-amino-acid polypeptide reads, in one-letter code: UDP-N-acetylglucosamine 1-carboxyvinyltransferase (417 aa).

22–23 (KN) is a binding site for phosphoenolpyruvate. Arginine 92 lines the UDP-N-acetyl-alpha-D-glucosamine pocket. Cysteine 116 functions as the Proton donor in the catalytic mechanism. Cysteine 116 bears the 2-(S-cysteinyl)pyruvic acid O-phosphothioketal mark. Residues aspartate 304 and valine 326 each coordinate UDP-N-acetyl-alpha-D-glucosamine.

This sequence belongs to the EPSP synthase family. MurA subfamily.

Its subcellular location is the cytoplasm. The catalysed reaction is phosphoenolpyruvate + UDP-N-acetyl-alpha-D-glucosamine = UDP-N-acetyl-3-O-(1-carboxyvinyl)-alpha-D-glucosamine + phosphate. The protein operates within cell wall biogenesis; peptidoglycan biosynthesis. Its function is as follows. Cell wall formation. Adds enolpyruvyl to UDP-N-acetylglucosamine. In Syntrophotalea carbinolica (strain DSM 2380 / NBRC 103641 / GraBd1) (Pelobacter carbinolicus), this protein is UDP-N-acetylglucosamine 1-carboxyvinyltransferase.